The chain runs to 80 residues: Adipogenin (80 aa).

A helical membrane pass occupies residues 16–36; that stretch reads FLVFWLCLPVALLLFLTIVWL. The residue at position 63 (Ser-63) is a Phosphoserine.

This sequence belongs to the adipogenin family. Selectively expressed in adipose tissue where it is particularly enriched in brown adipose tissue. In adipose tissue, expressed exclusively in adipocytes and not in the stromal-vascular cell population. Expressed at much lower levels in heart, stomach and muscle and barely detected in kidney and lung.

The protein resides in the membrane. The protein localises to the nucleus. Its function is as follows. Plays a role in stimulating adipocyte differentiation and development. The polypeptide is Adipogenin (Adig) (Mus musculus (Mouse)).